The primary structure comprises 327 residues: Methionyl-tRNA formyltransferase (327 aa).

121 to 124 contacts (6S)-5,6,7,8-tetrahydrofolate; sequence SLLP.

Belongs to the Fmt family.

The catalysed reaction is L-methionyl-tRNA(fMet) + (6R)-10-formyltetrahydrofolate = N-formyl-L-methionyl-tRNA(fMet) + (6S)-5,6,7,8-tetrahydrofolate + H(+). Its function is as follows. Attaches a formyl group to the free amino group of methionyl-tRNA(fMet). The formyl group appears to play a dual role in the initiator identity of N-formylmethionyl-tRNA by promoting its recognition by IF2 and preventing the misappropriation of this tRNA by the elongation apparatus. The protein is Methionyl-tRNA formyltransferase of Burkholderia pseudomallei (strain 1710b).